The sequence spans 402 residues: Multidrug resistance protein MdtH (402 aa).

The Cytoplasmic portion of the chain corresponds to 1–12 (MSRVSQARNLGK). A helical transmembrane segment spans residues 13–33 (YFLLIDNMLVVLGFFVVFPLI). Residues 34–98 (SIRFVDQMGW…GFATMGIAHE (65 aa)) lie on the Periplasmic side of the membrane. Residues 99–116 (PWLLWFSCFLSGLGGTLF) form a helical membrane-spanning segment. At 117 to 138 (DPPRSALVVKLIRPEQRGRFFS) the chain is on the cytoplasmic side. Residues 139–159 (LLMMQDSAGAVIGALLGSWLL) form a helical membrane-spanning segment. The Periplasmic portion of the chain corresponds to 160–164 (QYDFR). Residues 165-185 (LVCATGAILFILCALFNAWLL) traverse the membrane as a helical segment. The Cytoplasmic segment spans residues 186–213 (PAWKLSTVRTPVREGMRRVMSDKRFVTY). Residues 214–234 (VLTLAGYYMLAVQVMLMLPIM) form a helical membrane-spanning segment. The Periplasmic segment spans residues 235–243 (VNDIAGSPA). A helical membrane pass occupies residues 244-264 (AVKWMYAIEACLSLTLLYPIA). Residues 265–276 (RWSEKRFRLEHR) lie on the Cytoplasmic side of the membrane. The helical transmembrane segment at 277-297 (LMAGLLVMSLSMIPIGMVGNL) threads the bilayer. Over 298–299 (QQ) the chain is Periplasmic. Residues 300 to 320 (LFTLICAFYIGSVIAEPARET) form a helical membrane-spanning segment. Over 321 to 339 (LSASLADARARGSYMGFSR) the chain is Cytoplasmic. Residues 340-360 (LGLAIGGAIGYIGGGWLFDMG) traverse the membrane as a helical segment. Topologically, residues 361-367 (KALTQPE) are periplasmic. The helical transmembrane segment at 368–388 (LPWMMLGIIGFITFLALGWQF) threads the bilayer. At 389 to 402 (SHKRTPRRMLEPGA) the chain is on the cytoplasmic side.

It belongs to the major facilitator superfamily. DHA1 family. MdtH (TC 2.A.1.2.21) subfamily.

It is found in the cell inner membrane. This is Multidrug resistance protein MdtH from Salmonella paratyphi B (strain ATCC BAA-1250 / SPB7).